The sequence spans 597 residues: Arginine--tRNA ligase (597 aa).

A 'HIGH' region motif is present at residues 124–134; it reads PNVAKPLHVGH.

It belongs to the class-I aminoacyl-tRNA synthetase family. In terms of assembly, monomer.

It localises to the cytoplasm. The catalysed reaction is tRNA(Arg) + L-arginine + ATP = L-arginyl-tRNA(Arg) + AMP + diphosphate. The protein is Arginine--tRNA ligase of Agathobacter rectalis (strain ATCC 33656 / DSM 3377 / JCM 17463 / KCTC 5835 / VPI 0990) (Eubacterium rectale).